The primary structure comprises 211 residues: Phosphoheptose isomerase (211 aa).

Positions 50-211 (IAGTFEDGGK…VERMLGYCRL (162 aa)) constitute an SIS domain. 65 to 67 (NGG) lines the substrate pocket. Residues H74 and E78 each coordinate Zn(2+). Substrate contacts are provided by residues E78, 109-110 (ND), 135-137 (STS), S140, and Q188. Positions 188 and 196 each coordinate Zn(2+).

The protein belongs to the SIS family. GmhA subfamily. It depends on Zn(2+) as a cofactor.

The protein resides in the cytoplasm. It carries out the reaction 2 D-sedoheptulose 7-phosphate = D-glycero-alpha-D-manno-heptose 7-phosphate + D-glycero-beta-D-manno-heptose 7-phosphate. Its pathway is carbohydrate biosynthesis; D-glycero-D-manno-heptose 7-phosphate biosynthesis; D-glycero-alpha-D-manno-heptose 7-phosphate and D-glycero-beta-D-manno-heptose 7-phosphate from sedoheptulose 7-phosphate: step 1/1. Functionally, catalyzes the isomerization of sedoheptulose 7-phosphate in D-glycero-D-manno-heptose 7-phosphate. The polypeptide is Phosphoheptose isomerase (Pelodictyon phaeoclathratiforme (strain DSM 5477 / BU-1)).